The sequence spans 154 residues: Deoxyuridine 5'-triphosphate nucleotidohydrolase (154 aa).

Residues 64-66, Asn-77, 81-83, and Lys-91 contribute to the substrate site; these read RSG and TVD.

Belongs to the dUTPase family. As to quaternary structure, homotrimer. It depends on Mg(2+) as a cofactor.

It catalyses the reaction dUTP + H2O = dUMP + diphosphate + H(+). It functions in the pathway pyrimidine metabolism; dUMP biosynthesis; dUMP from dCTP (dUTP route): step 2/2. Its function is as follows. This enzyme is involved in nucleotide metabolism: it produces dUMP, the immediate precursor of thymidine nucleotides and it decreases the intracellular concentration of dUTP so that uracil cannot be incorporated into DNA. The chain is Deoxyuridine 5'-triphosphate nucleotidohydrolase from Mycobacterium leprae (strain Br4923).